Consider the following 21-residue polypeptide: Outer membrane protein A (21 aa).

Residues 6 to 16 form a beta stranded membrane-spanning segment; the sequence is TWYTGAKLGWS.

This sequence belongs to the outer membrane OOP (TC 1.B.6) superfamily. OmpA family. In terms of assembly, monomer and homodimer.

The protein localises to the cell outer membrane. Functionally, with TolR probably plays a role in maintaining the position of the peptidoglycan cell wall in the periplasm. Acts as a porin with low permeability that allows slow penetration of small solutes; an internal gate slows down solute passage. The polypeptide is Outer membrane protein A (Actinobacillus lignieresii).